The primary structure comprises 123 residues: Seminal vesicle secretory protein 5 (123 aa).

The signal sequence occupies residues 1 to 21; it reads MSPTGFFLLTVLLVLVTEAAS. Residues 50–123 are disordered; the sequence is GSSSTFGAFS…TKVKTRITRK (74 aa). The span at 64-75 shows a compositional bias: low complexity; sequence SRSNFKSKSPSS. Basic and acidic residues predominate over residues 77 to 87; it reads TREKVNEESRS.

The protein belongs to the SVP2/SVP5/SVP6 family. In terms of tissue distribution, testis.

The protein resides in the secreted. The protein localises to the extracellular space. The polypeptide is Seminal vesicle secretory protein 5 (Svs5) (Rattus norvegicus (Rat)).